Consider the following 819-residue polypeptide: MVVLSAFPVNASPLLDTGDFADCRIVFVDANAPADDVNASSALQLPASSPAKAPANPGRSAPPSPGPRLATGVARNILSPKPKIWLGQFPQPATSRTGAGVEAPSRPAGPQPLLVVPGHRVVLAAASPLFRQQLATQADAIIRLRDRTSLPAAQQLLLAHVYGRPLDWPALTPTTLAQLLVLSADHALPALQQAAAARLLHLLAAKRPVGGPGPAVAAAAAGVNTPLQRPPCGPSPLEGGAGTALPAPPPAAAAPPAGAAAVVCTALQEVHSVYVEAIAAVVGLPTDVAGAGACVGLAAAARVLLLDALQDFEAAWQVPSLRRAFLGLPLPAALEVLASPALAVSCEGVVALAALAYEATRTQRAVEAAAAAAGEAGAADGGGGGGVGDGGGVLRPLDTCEQLALYGCVRWHLLHIDGRTHEWNSFLKNAVQRAPHLQRLLEHGTAASGTGGAVAAATGGVGLAPHAAAVPELAAAAAACGPYAAAASLLDLSQLTQSLLYTRQMRAEGGTGAAAHLPYMARRAGPRPRPTGHLQTAVHLQMDVPYVVLREAVARVQARMEQQERQRRLLERQQQQQQQHTKGGGGGGGVPAATAAALPLAVAPVAAVAVEEDLVGSELVFHAGYWWQMVVSLGPLCRYRMALAGPSAAAPPASGSAAVARNTPSALAAAAAAVAHDTDTRLVCFVGVRPLLLLTEAEVEAAAGRGVPSGWAGEGGCGGEGEGGEADGVAAVAAGAAVAARLLPSTVYVEQFEVWNERDLPQGRAALGPTAFARAGGFKGTLTLFALGAAALTSEAYWAKAVSGPEGALRVRARVAGVH.

Low complexity-rich tracts occupy residues 46 to 59 (PASS…NPGR) and 572 to 581 (RQQQQQQQHT). Disordered regions lie at residues 46 to 72 (PASS…LATG) and 564 to 590 (ERQR…GGGV). Residues 546 to 580 (YVVLREAVARVQARMEQQERQRRLLERQQQQQQQH) adopt a coiled-coil conformation.

Its subcellular location is the cytoplasm. The protein resides in the cytoskeleton. It is found in the microtubule organizing center. The protein localises to the centrosome. It localises to the centriole. The polypeptide is Proteome of basal body protein 15 (Chlamydomonas reinhardtii (Chlamydomonas smithii)).